We begin with the raw amino-acid sequence, 419 residues long: Gamma-glutamyl phosphate reductase (419 aa).

Belongs to the gamma-glutamyl phosphate reductase family.

Its subcellular location is the cytoplasm. It catalyses the reaction L-glutamate 5-semialdehyde + phosphate + NADP(+) = L-glutamyl 5-phosphate + NADPH + H(+). It participates in amino-acid biosynthesis; L-proline biosynthesis; L-glutamate 5-semialdehyde from L-glutamate: step 2/2. In terms of biological role, catalyzes the NADPH-dependent reduction of L-glutamate 5-phosphate into L-glutamate 5-semialdehyde and phosphate. The product spontaneously undergoes cyclization to form 1-pyrroline-5-carboxylate. The protein is Gamma-glutamyl phosphate reductase of Caldicellulosiruptor saccharolyticus (strain ATCC 43494 / DSM 8903 / Tp8T 6331).